Here is a 488-residue protein sequence, read N- to C-terminus: MSQISMFVRKLHKFSYNPNYKFKCGLEIHTQLKTKYKLFSLSPTSYNEPPNTKLSYFDVGLPGTQPLLNPEALLLALKASVALNCDIQSYSSFDRKHYFYADQPLGYQITQHYYPLAKNGYVQLNKFDDMPDKVISLEQVQLEQDTGKTVNYDDRINVDLNRANTPLIEVVTKPDFENIDQVQAFVRKYQLLVSHLDICTGDLETGAIRVDANISVNNNPRVEIKNLGSSGEIVDALKYEYNRQVTLLQNNGKIIQETRGWNGIATESLRKKENAVDYRYVPDSELPVIRLDKNIQAQLQNTLDELPDSVLDRLTKEPYNLQLAHARNLLFQPEILDYYENIFGRIRDANKWFFHELLAAFAKSDVEFQVDIVLPDMLVDIVSSVEKNEISLTGARIILKHIIRNKSTKTLPQLIKELDIGKPEASAELEEAINEICQQIINTNADVVEKIARGHTNALQVLIGQAMKATKGKVHAKEFRSKFMELLK.

Belongs to the GatB/GatE family. GatB subfamily. As to quaternary structure, subunit of the heterotrimeric GatFAB amidotransferase (AdT) complex, composed of A, B and F subunits.

It localises to the mitochondrion. The catalysed reaction is L-glutamyl-tRNA(Gln) + L-glutamine + ATP + H2O = L-glutaminyl-tRNA(Gln) + L-glutamate + ADP + phosphate + H(+). In terms of biological role, allows the formation of correctly charged Gln-tRNA(Gln) through the transamidation of misacylated Glu-tRNA(Gln) in the mitochondria. The reaction takes place in the presence of glutamine and ATP through an activated gamma-phospho-Glu-tRNA(Gln). This is Glutamyl-tRNA(Gln) amidotransferase subunit B, mitochondrial from Candida albicans (strain SC5314 / ATCC MYA-2876) (Yeast).